Consider the following 170-residue polypeptide: Zinc finger matrin-type protein 5 (170 aa).

The C3H1-type zinc finger occupies 51–79; that stretch reads EQNKRPCRKFLLTGQCDFGSNCRFSHMSE. The tract at residues 150 to 170 is disordered; that stretch reads PPSLRAPPPGGWPLQPSVQWG.

Component of the U11/U12 snRNPs that are part of the U12-type spliceosome.

Its subcellular location is the nucleus. The protein is Zinc finger matrin-type protein 5 (ZMAT5) of Bos taurus (Bovine).